We begin with the raw amino-acid sequence, 308 residues long: MTVEASGEAPAATRCGFVALIGAPNVGKSTLVNALVGAKVTIVSRKVQTTRALIRGIVIENNAQIILVDTPGIFSPKRRLDRAMVSTAWSGAHDADLVCVLLDAKTGIDEEAEAILAKAASVNHDKILVINKVDLVQREKLLALAQAANERMPFAKTFMIAAISGDGVDDLRSTLAEMVPPGPFLYPEDQMSDAPMRHLAAEITREKIYRKLHQELPYQSTVETDKWEERKDKSVRIEQTIFVERESQRKIVLGKGGATIKSIGADSRKEISEILGVPVHLFLFVKVRENWGDDPDRYREMGLEFPKE.

Residues 14–181 form the Era-type G domain; sequence RCGFVALIGA…RSTLAEMVPP (168 aa). Residues 22 to 29 form a G1 region; the sequence is GAPNVGKS. 22 to 29 is a binding site for GTP; it reads GAPNVGKS. The tract at residues 48–52 is G2; it reads QTTRA. Residues 69-72 form a G3 region; the sequence is DTPG. GTP-binding positions include 69-73 and 131-134; these read DTPGI and NKVD. The tract at residues 131-134 is G4; sequence NKVD. The G5 stretch occupies residues 160-162; sequence IAA. The KH type-2 domain maps to 212–289; the sequence is LHQELPYQST…HLFLFVKVRE (78 aa).

It belongs to the TRAFAC class TrmE-Era-EngA-EngB-Septin-like GTPase superfamily. Era GTPase family. As to quaternary structure, monomer.

It localises to the cytoplasm. The protein localises to the cell inner membrane. Functionally, an essential GTPase that binds both GDP and GTP, with rapid nucleotide exchange. Plays a role in 16S rRNA processing and 30S ribosomal subunit biogenesis and possibly also in cell cycle regulation and energy metabolism. The sequence is that of GTPase Era from Bradyrhizobium diazoefficiens (strain JCM 10833 / BCRC 13528 / IAM 13628 / NBRC 14792 / USDA 110).